The following is a 96-amino-acid chain: Small ubiquitin-related modifier 2 (96 aa).

A Glycyl lysine isopeptide (Lys-Gly) (interchain with G-Cter in SUMO) cross-link involves residue Lys-11. A Ubiquitin-like domain is found at 16-96 (DHINLKVAGQ…FQQQTGGHRI (81 aa)). Gly-93 participates in a covalent cross-link: Glycyl lysine isopeptide (Gly-Lys) (interchain with K-? in acceptor proteins). Positions 94–96 (HRI) are excised as a propeptide.

It belongs to the ubiquitin family. SUMO subfamily. Interacts with sae2 and ube2i. Covalently attached to a number of proteins. Post-translationally, polymeric chains can be formed through Lys-11 cross-linking. Cleavage of precursor form by a sentrin-specific protease is necessary for function.

The protein resides in the nucleus. In terms of biological role, ubiquitin-like protein that can be covalently attached to proteins as a monomer or as a lysine-linked polymer. Covalent attachment via an isopeptide bond to its substrates requires prior activation by the E1 complex sae1-sae2 and linkage to the E2 enzyme ube2i, and can be promoted by an E3 ligase such as pias1-4. This post-translational modification on lysine residues of proteins plays a crucial role in a number of cellular processes such as nuclear transport, DNA replication and repair, mitosis and signal transduction. Polymeric sumo2 chains are also susceptible to polyubiquitination which functions as a signal for proteasomal degradation of modified proteins. In Danio rerio (Zebrafish), this protein is Small ubiquitin-related modifier 2.